The chain runs to 615 residues: Dihydroxy-acid dehydratase (615 aa).

Asp81 is a binding site for Mg(2+). Cys122 is a binding site for [2Fe-2S] cluster. Residues Asp123 and Lys124 each coordinate Mg(2+). The residue at position 124 (Lys124) is an N6-carboxylysine. [2Fe-2S] cluster is bound at residue Cys193. Position 489 (Glu489) interacts with Mg(2+). Residue Ser515 is the Proton acceptor of the active site.

This sequence belongs to the IlvD/Edd family. Homodimer. [2Fe-2S] cluster is required as a cofactor. The cofactor is Mg(2+).

The catalysed reaction is (2R)-2,3-dihydroxy-3-methylbutanoate = 3-methyl-2-oxobutanoate + H2O. It carries out the reaction (2R,3R)-2,3-dihydroxy-3-methylpentanoate = (S)-3-methyl-2-oxopentanoate + H2O. Its pathway is amino-acid biosynthesis; L-isoleucine biosynthesis; L-isoleucine from 2-oxobutanoate: step 3/4. It participates in amino-acid biosynthesis; L-valine biosynthesis; L-valine from pyruvate: step 3/4. Functionally, functions in the biosynthesis of branched-chain amino acids. Catalyzes the dehydration of (2R,3R)-2,3-dihydroxy-3-methylpentanoate (2,3-dihydroxy-3-methylvalerate) into 2-oxo-3-methylpentanoate (2-oxo-3-methylvalerate) and of (2R)-2,3-dihydroxy-3-methylbutanoate (2,3-dihydroxyisovalerate) into 2-oxo-3-methylbutanoate (2-oxoisovalerate), the penultimate precursor to L-isoleucine and L-valine, respectively. This Pseudomonas syringae pv. syringae (strain B728a) protein is Dihydroxy-acid dehydratase.